A 208-amino-acid chain; its full sequence is Uracil phosphoribosyltransferase (208 aa).

5-phospho-alpha-D-ribose 1-diphosphate-binding positions include arginine 78, arginine 103, and 130–138 (DPMLATGGS). Uracil-binding positions include isoleucine 193 and 198 to 200 (GDA). Aspartate 199 is a binding site for 5-phospho-alpha-D-ribose 1-diphosphate.

Belongs to the UPRTase family. The cofactor is Mg(2+).

The catalysed reaction is UMP + diphosphate = 5-phospho-alpha-D-ribose 1-diphosphate + uracil. Its pathway is pyrimidine metabolism; UMP biosynthesis via salvage pathway; UMP from uracil: step 1/1. With respect to regulation, allosterically activated by GTP. Catalyzes the conversion of uracil and 5-phospho-alpha-D-ribose 1-diphosphate (PRPP) to UMP and diphosphate. The protein is Uracil phosphoribosyltransferase of Shewanella amazonensis (strain ATCC BAA-1098 / SB2B).